The primary structure comprises 316 residues: HPr kinase/phosphorylase (316 aa).

Active-site residues include H143 and K164. G158–S165 is a binding site for ATP. Residue S165 coordinates Mg(2+). The Proton acceptor; for phosphorylation activity. Proton donor; for dephosphorylation activity role is filled by D182. Positions L206–N215 are important for the catalytic mechanism of both phosphorylation and dephosphorylation. E207 contacts Mg(2+). The active site involves R251. Residues P272 to R277 form an important for the catalytic mechanism of dephosphorylation region.

It belongs to the HPrK/P family. In terms of assembly, homohexamer. Requires Mg(2+) as cofactor.

It carries out the reaction [HPr protein]-L-serine + ATP = [HPr protein]-O-phospho-L-serine + ADP + H(+). The enzyme catalyses [HPr protein]-O-phospho-L-serine + phosphate + H(+) = [HPr protein]-L-serine + diphosphate. Functionally, catalyzes the ATP- as well as the pyrophosphate-dependent phosphorylation of a specific serine residue in HPr, a phosphocarrier protein of the phosphoenolpyruvate-dependent sugar phosphotransferase system (PTS). HprK/P also catalyzes the pyrophosphate-producing, inorganic phosphate-dependent dephosphorylation (phosphorolysis) of seryl-phosphorylated HPr (P-Ser-HPr). The polypeptide is HPr kinase/phosphorylase (Xylella fastidiosa (strain 9a5c)).